The sequence spans 593 residues: Regulatory protein NPR1 (593 aa).

4 positions are modified to phosphoserine: S11, S15, S55, and S59. One can recognise a BTB domain in the interval 65–144; the sequence is SDAKLVLSDG…VYSSRVRPPP (80 aa). A C2HC NPR-type zinc finger spans residues 147–161; it reads VSECADENCCHVACR. Zn(2+) contacts are provided by C150 and C155. C156 is modified (S-nitrosocysteine). Residues H157 and C160 each coordinate Zn(2+). ANK repeat units follow at residues 229–258, 265–295, 297–324, 328–357, and 361–397; these read KSNV…ELGL, KHVS…NLDD, CALH…DVNH, RGYT…SASE, and EGRT…CVEI. An SIM3, required fo binding to SUMO3 and subsequent sumoylation motif is present at residues 345 to 348; it reads ILSL. Residues 387–525 form a salicylic acid-binding core (SBC) region; that stretch reads HSLKGRLCVE…DQIMNCEDLT (139 aa). R432 is a binding site for salicylate. Positions 537–554 match the Nuclear localization signal motif; the sequence is KRLQKKQRYMEIQETLKK. The disordered stretch occupies residues 563–593; it reads LGNSSLTDSTSSTSKSTGGKRSNRKLSHRRR. A compositionally biased stretch (low complexity) spans 566 to 579; it reads SSLTDSTSSTSKST. A compositionally biased stretch (basic residues) spans 583-593; the sequence is RSNRKLSHRRR.

The protein belongs to the plant 'ANKYRIN-BTB/POZ' family. 'NPR1-like' subfamily. As to quaternary structure, homodimer. Oligomer of dimers in an uninduced quiescent state; disulfide-linked. Forms activated (i.e. sumoylated) homodimers and monomers upon systemic acquired resistance (SAR) induction. Interacts with TGA1, TGA3, TGA4, TGA5, TGA6, TGA7 and with reduced forms of TGA1 and TGA4. Activated homodimer binds two TGA3 dimers in the presence of DNA via its ANK 2 repeat (265-295), thus forming a TGA3(2)-NPR1(2)-TGA3(2) complex in which NPR1 serves as a transcription cofactor by bridging two transcription factor complexes in an enhanceosome. Interacts with NIMIN-1 and NIMIN-3 via its C-terminal region, and with NIMIN-2 via its N-terminal region. Interacts with SUMO3 but not with SUMO1 and SUMO2; this interaction is required for phosphorylation at Ser-11 and Ser-15, and triggers activation by sumoylation and subsequent degradation. Binds to NPR3 and NPR4; these interactions are promoted by association of salicylic acid (SA) with NPR3, but disrupted by SA association with NPR4, probably due to conformational changes. Binds to CUL3A, a core component of the cullin-RING ubiquitin ligases (CRL); this interaction requires NPR3 and NPR4. Interacts with NPR2 independently of SA. Binds to WRKY70 when unmodified (i.e. not sumoylated). In terms of processing, phosphorylation at Ser-55 and Ser-59 prevents sumoylation to ensure stability and quiescence. Phosphorylated at Ser-11 and Ser-15 in the nucleus; facilitates its recruitment to a cullin3-based ubiquitin ligase leading to polyubiquitination and subsequent CUL3/CSN-mediated degradation. This phosphorylation at Ser-11 and Ser-15 requires interaction with SUMO3, and promotes in turn activation by sumoylation and subsequent degradation. Post-translationally, ubiquitinated. In terms of processing, sumoylated by SUMO3 independently of an E3 ligase to activate defense gene expression by switching from association with WRKY transcriptional repressors (e.g. WRKY70) to TGA transcriptional activators (e.g. TGA3). Sumoylation is inhibited by phosphorylation at Ser-55 and Ser-59, but seems to promote phosphorylation at Ser-11 and Ser-15. Sumoylation also triggers degradation, making immune induction transient. The Cys-82-SH group reacts with Cys-216-SH of the other subunit to form an intermolecular disulfide. This disulfide might subsequently be reduced upon systemic acquired resistance (SAR) induction. Post-translationally, S-nitrosylation at Cys-156 facilitates its oligomerization.

The protein resides in the cytoplasm. It localises to the nucleus. The protein localises to the nuclear body. Its pathway is protein modification; protein ubiquitination. Its function is as follows. Salicylic acid (SA)-binding substrate-specific adapter of an E3 ubiquitin-protein ligase complex (CUL3-RBX1-BTB) which mediates the ubiquitination and subsequent proteasomal degradation of target proteins. Transcription cofactor that represses gene expression in the absence of salicylic acid (SA), when attached to negative cis-elements (W-box) with WRKY transcription factors (e.g. WRKY70), but stimulates gene expression upon activation by SA, when sumoylated and attached to positive cis-elements (as-1) with TGA transcription factors (e.g. TGA3), thus confering immunity through a series of gene regulations ending in a significant increase in antimicrobial and defense genes expression (e.g. PR-1 and PR-2). Binds to SA with low capacity; this leads to conformational changes. Key positive regulator of the SA-dependent signaling pathway that negatively regulates jasmonic acid (JA)-dependent signaling pathway. Controls the onset of systemic acquired resistance (SAR). Upon SAR induction, a biphasic change in cellular reduction potential occurs, resulting in reduction of the cytoplasmic oligomeric form to dimeric and monomeric forms, which accumulate in the nucleus and activate gene expression. Appears to control lesion expansion by acting as an inhibitor of programmed cell death (PCD) during effector-triggered immunity (ETI) that occurs in response to incompatible interaction with avirulent pathogenic bacteria (i.e. Pseudomonas syringae ES4326/avrRpt2) ending in a hypersensitive response (HR). Phosphorylated form is target of proteasome degradation. The protein is Regulatory protein NPR1 of Arabidopsis thaliana (Mouse-ear cress).